We begin with the raw amino-acid sequence, 931 residues long: Transportin (931 aa).

HEAT repeat units lie at residues 10 to 37 (GLKQ…EELD), 42 to 79 (VPDY…QYFE), 88 to 121 (YIKR…KSCF), 127 to 164 (LLPA…LDSD), 171 to 201 (NQLI…YFII), 214 to 241 (FLKG…VTLV), 253 to 280 (KDVI…FWTA), 296 to 421 (PVLV…LSGI), 430 to 459 (VTLP…GAIA), 471 to 498 (SKVI…TLSR), 512 to 545 (LHPL…EEEA), 553 to 586 (LQMI…AKVV), 594 to 632 (ELIN…SSIG), 640 to 693 (SLFF…GIGT), 704 to 735 (LPHL…KFCL), 743 to 776 (PDYL…IRMP), 784 to 819 (VAIR…IVSP), 827 to 860 (DKFI…INNN), and 869 to 900 (VYIC…KTSM). In terms of domain architecture, Importin N-terminal spans 32 to 99 (IREELDKFHS…KREILPVLSD (68 aa)). The tract at residues 317–401 (DQGDDSMTPD…DDDDDDDGFE (85 aa)) is disordered. Residues 358–381 (DNNNNSNNNNSSNNNSSNNNNNNN) are compositionally biased toward low complexity. Residues 382–401 (NEDDEEYNDDDDDDDDDGFE) show a composition bias toward acidic residues.

The protein belongs to the importin beta family. Importin beta-2 subfamily. As to quaternary structure, forms a complex with an importin alpha subunit.

Its subcellular location is the cytoplasm. The protein localises to the nucleus envelope. Its function is as follows. Functions in nuclear protein import via a substrate-importin alpha-beta transport complex that passes though the nuclear pore complexes (NPC). Mediates docking of the substrate-importin complex to distinct nucleoporins. In Dictyostelium discoideum (Social amoeba), this protein is Transportin (tnpo).